Consider the following 138-residue polypeptide: Gene 64 protein (138 aa).

This is Gene 64 protein (64) from Mycobacterium (Mycobacteriophage D29).